Here is a 372-residue protein sequence, read N- to C-terminus: DNA replication and repair protein RecF (372 aa).

Residue 30–37 (GANGQGKT) coordinates ATP.

Belongs to the RecF family.

Its subcellular location is the cytoplasm. Its function is as follows. The RecF protein is involved in DNA metabolism; it is required for DNA replication and normal SOS inducibility. RecF binds preferentially to single-stranded, linear DNA. It also seems to bind ATP. This Heliobacterium modesticaldum (strain ATCC 51547 / Ice1) protein is DNA replication and repair protein RecF.